Here is a 456-residue protein sequence, read N- to C-terminus: Chaperone protein dnaJ GFA2, mitochondrial (456 aa).

Residues 1–89 (MVPSNGAKVL…RSFHGTGSSF (89 aa)) constitute a mitochondrion transit peptide. The J domain maps to 94–159 (DYYSVLGVSK…EKRDLYDQVG (66 aa)). The segment at 225–303 (GCSKTVTFQT…CRGARVVRGQ (79 aa)) adopts a CR-type zinc-finger fold. Zn(2+) contacts are provided by cysteine 238, cysteine 241, cysteine 255, cysteine 258, cysteine 277, cysteine 280, cysteine 291, and cysteine 294. CXXCXGXG motif repeat units lie at residues 238-245 (CNTCGGQG), 255-262 (CKACNGSG), 277-284 (CQKCGGAG), and 291-298 (CKSCRGAR).

Belongs to the DnaJ family. In terms of tissue distribution, widely expressed.

Its subcellular location is the mitochondrion. Its function is as follows. Chaperone that may play a role in mitochondrial protein folding. Involved in female gametophyte development. Required for cell death of the synergid cells during fertilization process, and fusion of the polar nuclei during megagametogenesis. This is Chaperone protein dnaJ GFA2, mitochondrial from Arabidopsis thaliana (Mouse-ear cress).